Here is a 339-residue protein sequence, read N- to C-terminus: NADH-quinone oxidoreductase subunit H (339 aa).

8 helical membrane-spanning segments follow: residues 7–27, 77–97, 112–132, 149–169, 180–200, 235–255, 276–296, and 315–335; these read LFWITLKIMALVVPLMLAVAY, VLFVIAPLLAIMPALAAWAVI, LLYILAMTSLGVYGIIIAGWA, VVSYEIAMGFALVGVLMAAGS, AGGIFHWFWLPLLPLFLVYWI, VFFLAEYANMILISAVAAVMF, VPGVVWFMLKTAFFMFCYLWF, and VLIPVTVVWLIVLTIFIVTGF.

It belongs to the complex I subunit 1 family. NDH-1 is composed of 14 different subunits. Subunits NuoA, H, J, K, L, M, N constitute the membrane sector of the complex.

The protein localises to the cell inner membrane. It carries out the reaction a quinone + NADH + 5 H(+)(in) = a quinol + NAD(+) + 4 H(+)(out). In terms of biological role, NDH-1 shuttles electrons from NADH, via FMN and iron-sulfur (Fe-S) centers, to quinones in the respiratory chain. The immediate electron acceptor for the enzyme in this species is believed to be ubiquinone. Couples the redox reaction to proton translocation (for every two electrons transferred, four hydrogen ions are translocated across the cytoplasmic membrane), and thus conserves the redox energy in a proton gradient. This subunit may bind ubiquinone. In Alkalilimnicola ehrlichii (strain ATCC BAA-1101 / DSM 17681 / MLHE-1), this protein is NADH-quinone oxidoreductase subunit H.